We begin with the raw amino-acid sequence, 88 residues long: UPF0297 protein Ccel_2240 (88 aa).

It belongs to the UPF0297 family.

The protein is UPF0297 protein Ccel_2240 of Ruminiclostridium cellulolyticum (strain ATCC 35319 / DSM 5812 / JCM 6584 / H10) (Clostridium cellulolyticum).